We begin with the raw amino-acid sequence, 253 residues long: MRTPIIAGNWKMNKTVQEAKDFVNTLPTLPDSKEVESVICAPAIQLDALTTAVKEGKAQGLEIGAQNTYFEDNGAFTGETSPVALADLGVKYVVIGHSERRELFHETDEEINKKAHAIFKHGMTPIICVGETDEERESGKANDVVGEQVKKAVAGLSEDQLKSVVIAYEPIWAIGTGKSSTSEDANEMCAFVRQTIADLSSKEVSEATRIQYGGSVKPNNIKEYMAQTDIDGALVGGASLKVEDFVQLLEGAK.

N9 to K11 contributes to the substrate binding site. The active-site Electrophile is H97. E169 acts as the Proton acceptor in catalysis. Substrate-binding positions include G175, S215, and G236–G237.

This sequence belongs to the triosephosphate isomerase family. As to quaternary structure, homodimer.

Its subcellular location is the cytoplasm. The enzyme catalyses D-glyceraldehyde 3-phosphate = dihydroxyacetone phosphate. It functions in the pathway carbohydrate biosynthesis; gluconeogenesis. Its pathway is carbohydrate degradation; glycolysis; D-glyceraldehyde 3-phosphate from glycerone phosphate: step 1/1. Its function is as follows. Involved in the gluconeogenesis. Catalyzes stereospecifically the conversion of dihydroxyacetone phosphate (DHAP) to D-glyceraldehyde-3-phosphate (G3P). In Staphylococcus aureus (strain NCTC 8325 / PS 47), this protein is Triosephosphate isomerase.